The primary structure comprises 151 residues: uncharacterized protein (151 aa).

The tract at residues 1–24 is disordered; sequence MHAKTKKLGTDTSYKRPQVTAQEQ.

This is an uncharacterized protein from Acanthamoeba polyphaga mimivirus (APMV).